The chain runs to 287 residues: Probable phosphite transport system-binding protein PtxB (287 aa).

Positions 1–23 (MKRLSALLLTCLLSAVSSLSALA) are cleaved as a signal peptide.

This sequence belongs to the phosphate/phosphite/phosphonate binding protein family.

In terms of biological role, probably forms part of a binding-protein-dependent phosphite transporter. Required for oxidation of phosphite to phosphate. The polypeptide is Probable phosphite transport system-binding protein PtxB (ptxB) (Stutzerimonas stutzeri (Pseudomonas stutzeri)).